The following is a 544-amino-acid chain: Chaperonin GroEL (544 aa).

Residues 30 to 33 (TLGP), K51, 87 to 91 (DGTTT), G415, 479 to 481 (NAA), and D495 each bind ATP.

This sequence belongs to the chaperonin (HSP60) family. As to quaternary structure, forms a cylinder of 14 subunits composed of two heptameric rings stacked back-to-back. Interacts with the co-chaperonin GroES.

The protein localises to the cytoplasm. It carries out the reaction ATP + H2O + a folded polypeptide = ADP + phosphate + an unfolded polypeptide.. In terms of biological role, together with its co-chaperonin GroES, plays an essential role in assisting protein folding. The GroEL-GroES system forms a nano-cage that allows encapsulation of the non-native substrate proteins and provides a physical environment optimized to promote and accelerate protein folding. The chain is Chaperonin GroEL from Francisella tularensis subsp. tularensis (strain WY96-3418).